The sequence spans 82 residues: Small ribosomal subunit protein uS17 (82 aa).

This sequence belongs to the universal ribosomal protein uS17 family. Part of the 30S ribosomal subunit.

In terms of biological role, one of the primary rRNA binding proteins, it binds specifically to the 5'-end of 16S ribosomal RNA. In Bradyrhizobium diazoefficiens (strain JCM 10833 / BCRC 13528 / IAM 13628 / NBRC 14792 / USDA 110), this protein is Small ribosomal subunit protein uS17.